Here is a 204-residue protein sequence, read N- to C-terminus: Holliday junction branch migration complex subunit RuvA (204 aa).

Positions 1-64 (MIGRLQGILL…EDAHLLFGFA (64 aa)) are domain I. The tract at residues 65–143 (QKTDRTLFRE…GVKQSDFFVE (79 aa)) is domain II. Positions 144–155 (STHIPLSPSIES) are flexible linker. Positions 156 to 204 (HSESSSDEAISALIALGYKPVEAEKMVKRVAKPELTSEQVIREALKAAL) are domain III.

Belongs to the RuvA family. As to quaternary structure, homotetramer. Forms an RuvA(8)-RuvB(12)-Holliday junction (HJ) complex. HJ DNA is sandwiched between 2 RuvA tetramers; dsDNA enters through RuvA and exits via RuvB. An RuvB hexamer assembles on each DNA strand where it exits the tetramer. Each RuvB hexamer is contacted by two RuvA subunits (via domain III) on 2 adjacent RuvB subunits; this complex drives branch migration. In the full resolvosome a probable DNA-RuvA(4)-RuvB(12)-RuvC(2) complex forms which resolves the HJ.

The protein localises to the cytoplasm. In terms of biological role, the RuvA-RuvB-RuvC complex processes Holliday junction (HJ) DNA during genetic recombination and DNA repair, while the RuvA-RuvB complex plays an important role in the rescue of blocked DNA replication forks via replication fork reversal (RFR). RuvA specifically binds to HJ cruciform DNA, conferring on it an open structure. The RuvB hexamer acts as an ATP-dependent pump, pulling dsDNA into and through the RuvAB complex. HJ branch migration allows RuvC to scan DNA until it finds its consensus sequence, where it cleaves and resolves the cruciform DNA. The chain is Holliday junction branch migration complex subunit RuvA from Haemophilus influenzae (strain PittEE).